Consider the following 414-residue polypeptide: Histidine--tRNA ligase (414 aa).

The protein belongs to the class-II aminoacyl-tRNA synthetase family. In terms of assembly, homodimer.

The protein resides in the cytoplasm. The enzyme catalyses tRNA(His) + L-histidine + ATP = L-histidyl-tRNA(His) + AMP + diphosphate + H(+). The polypeptide is Histidine--tRNA ligase (Ehrlichia ruminantium (strain Welgevonden)).